The sequence spans 78 residues: uncharacterized protein (78 aa).

Helical transmembrane passes span 20-40 (SVYF…WLVV) and 57-77 (LLMD…ILIA).

The protein localises to the cell membrane. This is an uncharacterized protein from Escherichia coli (strain K12).